We begin with the raw amino-acid sequence, 551 residues long: MDRRRFIKGSMAMAAVCGTSGIASLFSQAAFAADSDIADGQTQRFDFSILQSMAHDLAQTAWRGAPRPLPDTLATMTPQAYNSIQYDAEKSLWHNVENRQLDAQFFHMGMGFRRRVRMFSVDPATHLAREIHFRPELFKYNDAGVDTKQLEGQSDLGFAGFRVFKAPELARRDVVSFLGASYFRAVDDTYQYGLSARGLAIDTYTDSKEEFPDFTAFWFDTVKPGATTFTVYALLDSASITGAYKFTIHCEKSQVIMDVENHLYARKDIKQLGIAPMTSMFSCGTNERRMCDTIHPQIHDSDRLSMWRGNGEWICRPLNNPQKLQFNAYTDNNPKGFGLLQLDRDFSHYQDIMGWYNKRPSLWVEPRNKWGKGTIGLMEIPTTGETLDNIVCFWQPEKAVKAGDEFAFQYRLYWSAQPPVHCPLARVMATRTGMGGFSEGWAPGEHYPEKWARRFAVDFVGGDLKAAAPKGIEPVITLSSGEAKQIEILYIEPIDGYRIQFDWYPTSDSTDPVDMRMYLRCQGDAISETWLYQYFPPAPDKRQYVDDRVMS.

A signal peptide (tat-type signal) is located at residues 1–32 (MDRRRFIKGSMAMAAVCGTSGIASLFSQAAFA).

This sequence belongs to the OpgD/OpgG family. Predicted to be exported by the Tat system. The position of the signal peptide cleavage has not been experimentally proven.

It localises to the periplasm. It functions in the pathway glycan metabolism; osmoregulated periplasmic glucan (OPG) biosynthesis. Functionally, probably involved in the control of the structural glucose backbone of osmoregulated periplasmic glucans (OPGs). This Escherichia coli (strain K12 / MC4100 / BW2952) protein is Glucans biosynthesis protein D.